Consider the following 257-residue polypeptide: Phosphate import ATP-binding protein PstB (257 aa).

Residues 11 to 252 (IQVRDLNFYY…PAKKQTEDYI (242 aa)) enclose the ABC transporter domain. 43-50 (GPSGCGKS) serves as a coordination point for ATP.

Belongs to the ABC transporter superfamily. Phosphate importer (TC 3.A.1.7) family. As to quaternary structure, the complex is composed of two ATP-binding proteins (PstB), two transmembrane proteins (PstC and PstA) and a solute-binding protein (PstS).

The protein resides in the cell inner membrane. The enzyme catalyses phosphate(out) + ATP + H2O = ADP + 2 phosphate(in) + H(+). Functionally, part of the ABC transporter complex PstSACB involved in phosphate import. Responsible for energy coupling to the transport system. The sequence is that of Phosphate import ATP-binding protein PstB from Enterobacter cloacae.